Reading from the N-terminus, the 317-residue chain is Aspartate carbamoyltransferase catalytic subunit (317 aa).

The carbamoyl phosphate site is built by R66 and T67. K94 contributes to the L-aspartate binding site. R116, H144, and Q147 together coordinate carbamoyl phosphate. Residues R177 and R231 each contribute to the L-aspartate site. Carbamoyl phosphate contacts are provided by G272 and P273.

This sequence belongs to the aspartate/ornithine carbamoyltransferase superfamily. ATCase family. Heterododecamer (2C3:3R2) of six catalytic PyrB chains organized as two trimers (C3), and six regulatory PyrI chains organized as three dimers (R2).

It carries out the reaction carbamoyl phosphate + L-aspartate = N-carbamoyl-L-aspartate + phosphate + H(+). Its pathway is pyrimidine metabolism; UMP biosynthesis via de novo pathway; (S)-dihydroorotate from bicarbonate: step 2/3. In terms of biological role, catalyzes the condensation of carbamoyl phosphate and aspartate to form carbamoyl aspartate and inorganic phosphate, the committed step in the de novo pyrimidine nucleotide biosynthesis pathway. This is Aspartate carbamoyltransferase catalytic subunit from Beijerinckia indica subsp. indica (strain ATCC 9039 / DSM 1715 / NCIMB 8712).